The primary structure comprises 308 residues: HPr kinase/phosphorylase (308 aa).

Active-site residues include His138 and Lys159. An ATP-binding site is contributed by 153 to 160; sequence GESGLGKS. Mg(2+) is bound at residue Ser160. Asp177 (proton acceptor; for phosphorylation activity. Proton donor; for dephosphorylation activity) is an active-site residue. The segment at 201 to 210 is important for the catalytic mechanism of both phosphorylation and dephosphorylation; that stretch reads LEVRGLGLLD. Glu202 serves as a coordination point for Mg(2+). Residue Arg243 is part of the active site. Residues 264–269 form an important for the catalytic mechanism of dephosphorylation region; sequence QVAAGR.

The protein belongs to the HPrK/P family. As to quaternary structure, homohexamer. The cofactor is Mg(2+).

It carries out the reaction [HPr protein]-L-serine + ATP = [HPr protein]-O-phospho-L-serine + ADP + H(+). It catalyses the reaction [HPr protein]-O-phospho-L-serine + phosphate + H(+) = [HPr protein]-L-serine + diphosphate. In terms of biological role, catalyzes the ATP- as well as the pyrophosphate-dependent phosphorylation of a specific serine residue in HPr, a phosphocarrier protein of the phosphoenolpyruvate-dependent sugar phosphotransferase system (PTS). HprK/P also catalyzes the pyrophosphate-producing, inorganic phosphate-dependent dephosphorylation (phosphorolysis) of seryl-phosphorylated HPr (P-Ser-HPr). The protein is HPr kinase/phosphorylase of Bordetella pertussis (strain Tohama I / ATCC BAA-589 / NCTC 13251).